We begin with the raw amino-acid sequence, 388 residues long: Succinate--CoA ligase [ADP-forming] subunit beta (388 aa).

In terms of domain architecture, ATP-grasp spans 9–244 (KKLFAEYGLP…PSQDDPREAH (236 aa)). Residues Lys-46, 53-55 (GRG), Glu-99, Thr-102, and Glu-107 each bind ATP. Positions 199 and 213 each coordinate Mg(2+). Residues Asn-264 and 321-323 (GIV) contribute to the substrate site.

This sequence belongs to the succinate/malate CoA ligase beta subunit family. Heterotetramer of two alpha and two beta subunits. Requires Mg(2+) as cofactor.

It carries out the reaction succinate + ATP + CoA = succinyl-CoA + ADP + phosphate. The catalysed reaction is GTP + succinate + CoA = succinyl-CoA + GDP + phosphate. Its pathway is carbohydrate metabolism; tricarboxylic acid cycle; succinate from succinyl-CoA (ligase route): step 1/1. Functionally, succinyl-CoA synthetase functions in the citric acid cycle (TCA), coupling the hydrolysis of succinyl-CoA to the synthesis of either ATP or GTP and thus represents the only step of substrate-level phosphorylation in the TCA. The beta subunit provides nucleotide specificity of the enzyme and binds the substrate succinate, while the binding sites for coenzyme A and phosphate are found in the alpha subunit. The sequence is that of Succinate--CoA ligase [ADP-forming] subunit beta from Aeromonas salmonicida (strain A449).